Reading from the N-terminus, the 218-residue chain is Cytidylate kinase (218 aa).

Residue 7–15 (GPSASGKSS) participates in ATP binding.

The protein belongs to the cytidylate kinase family. Type 1 subfamily.

It localises to the cytoplasm. It catalyses the reaction CMP + ATP = CDP + ADP. The enzyme catalyses dCMP + ATP = dCDP + ADP. The sequence is that of Cytidylate kinase from Borrelia hermsii (strain HS1 / DAH).